The chain runs to 463 residues: Argininosuccinate lyase (463 aa).

It belongs to the lyase 1 family. Argininosuccinate lyase subfamily.

It is found in the cytoplasm. It catalyses the reaction 2-(N(omega)-L-arginino)succinate = fumarate + L-arginine. The protein operates within amino-acid biosynthesis; L-arginine biosynthesis; L-arginine from L-ornithine and carbamoyl phosphate: step 3/3. This chain is Argininosuccinate lyase, found in Methylorubrum populi (strain ATCC BAA-705 / NCIMB 13946 / BJ001) (Methylobacterium populi).